Here is a 103-residue protein sequence, read N- to C-terminus: Histone H4 (103 aa).

The segment covering 1–14 has biased composition (gly residues); it reads MSGRGKGGKGLGKG. Positions 1-20 are disordered; the sequence is MSGRGKGGKGLGKGGAKRHR. Position 2 is an N-acetylserine (S2). N6-acetyl-N6-methyllysine; alternate is present on residues K6 and K13. N6-acetyllysine is present on K17. A DNA-binding region spans residues 17 to 21; it reads KRHRK. An N6-methyllysine modification is found at K21.

The protein belongs to the histone H4 family. As to quaternary structure, the nucleosome is a histone octamer containing two molecules each of H2A, H2B, H3 and H4 assembled in one H3-H4 heterotetramer and two H2A-H2B heterodimers. The octamer wraps approximately 147 bp of DNA.

The protein localises to the nucleus. It is found in the chromosome. Functionally, core component of nucleosome. Nucleosomes wrap and compact DNA into chromatin, limiting DNA accessibility to the cellular machineries which require DNA as a template. Histones thereby play a central role in transcription regulation, DNA repair, DNA replication and chromosomal stability. DNA accessibility is regulated via a complex set of post-translational modifications of histones, also called histone code, and nucleosome remodeling. The protein is Histone H4 (H4DEKL) of Dendronephthya klunzingeri (Klunzinger's soft coral).